Here is a 430-residue protein sequence, read N- to C-terminus: Tektin-2 (430 aa).

2 coiled-coil regions span residues 81–162 (CLTD…FEKL) and 265–379 (FRKR…DIAC).

It belongs to the tektin family. Microtubule inner protein component of sperm flagellar doublet microtubules. May interact with CCDC172. In terms of processing, tyrosine phosphorylated. Ubiquitinated, leading to its degradation. Deubiquitinated by USP16, promoting its stability. Expressed in trachea multiciliated cells.

It localises to the cytoplasm. It is found in the cytoskeleton. The protein localises to the cilium axoneme. Its subcellular location is the flagellum axoneme. The protein resides in the microtubule organizing center. Microtubule inner protein (MIP) part of the dynein-decorated doublet microtubules (DMTs) in cilia and flagellar axoneme. Plays a key role in the assembly or attachment of the inner dynein arm to microtubules in sperm flagella and tracheal cilia. Forms filamentous polymers in the walls of ciliary and flagellar microtubules. The sequence is that of Tektin-2 (TEKT2) from Bos taurus (Bovine).